The sequence spans 141 residues: Small ribosomal subunit protein bS6 (141 aa).

Residues 110 to 141 (SRTKVSDQPAAVEAAEAPAAPAAQEESAPASA) form a disordered region. A compositionally biased stretch (low complexity) spans 117–141 (QPAAVEAAEAPAAPAAQEESAPASA).

This sequence belongs to the bacterial ribosomal protein bS6 family.

Binds together with bS18 to 16S ribosomal RNA. The chain is Small ribosomal subunit protein bS6 from Acidobacterium capsulatum (strain ATCC 51196 / DSM 11244 / BCRC 80197 / JCM 7670 / NBRC 15755 / NCIMB 13165 / 161).